Here is a 394-residue protein sequence, read N- to C-terminus: Chaperone protein DnaJ (394 aa).

Residues 4–68 form the J domain; it reads DYYEILGVSR…ELRARYDRFG (65 aa). A CR-type zinc finger spans residues 136 to 218; the sequence is GGEKQIRISH…CNGEGLAQTT (83 aa). 8 residues coordinate Zn(2+): Cys-149, Cys-152, Cys-166, Cys-169, Cys-192, Cys-195, Cys-206, and Cys-209. 4 CXXCXGXG motif repeats span residues 149 to 156, 166 to 173, 192 to 199, and 206 to 213; these read CPVCGGSG, CPTCGGAG, and CYNCNGEG.

It belongs to the DnaJ family. In terms of assembly, homodimer. Zn(2+) serves as cofactor.

The protein localises to the cytoplasm. Its function is as follows. Participates actively in the response to hyperosmotic and heat shock by preventing the aggregation of stress-denatured proteins and by disaggregating proteins, also in an autonomous, DnaK-independent fashion. Unfolded proteins bind initially to DnaJ; upon interaction with the DnaJ-bound protein, DnaK hydrolyzes its bound ATP, resulting in the formation of a stable complex. GrpE releases ADP from DnaK; ATP binding to DnaK triggers the release of the substrate protein, thus completing the reaction cycle. Several rounds of ATP-dependent interactions between DnaJ, DnaK and GrpE are required for fully efficient folding. Also involved, together with DnaK and GrpE, in the DNA replication of plasmids through activation of initiation proteins. The protein is Chaperone protein DnaJ of Synechococcus sp. (strain JA-3-3Ab) (Cyanobacteria bacterium Yellowstone A-Prime).